The chain runs to 289 residues: Glycine--tRNA ligase alpha subunit (289 aa).

Belongs to the class-II aminoacyl-tRNA synthetase family. Tetramer of two alpha and two beta subunits.

The protein resides in the cytoplasm. The catalysed reaction is tRNA(Gly) + glycine + ATP = glycyl-tRNA(Gly) + AMP + diphosphate. The sequence is that of Glycine--tRNA ligase alpha subunit from Prochlorococcus marinus (strain MIT 9515).